The primary structure comprises 78 residues: Acyl carrier protein (78 aa).

In terms of domain architecture, Carrier spans 2–77 (SEIASRVKAI…DAVAYIEEHA (76 aa)). O-(pantetheine 4'-phosphoryl)serine is present on Ser-37.

It belongs to the acyl carrier protein (ACP) family. 4'-phosphopantetheine is transferred from CoA to a specific serine of apo-ACP by AcpS. This modification is essential for activity because fatty acids are bound in thioester linkage to the sulfhydryl of the prosthetic group.

The protein localises to the cytoplasm. Its pathway is lipid metabolism; fatty acid biosynthesis. Functionally, carrier of the growing fatty acid chain in fatty acid biosynthesis. This Bacteroides fragilis (strain ATCC 25285 / DSM 2151 / CCUG 4856 / JCM 11019 / LMG 10263 / NCTC 9343 / Onslow / VPI 2553 / EN-2) protein is Acyl carrier protein.